A 358-amino-acid chain; its full sequence is U5 small nuclear ribonucleoprotein 40 kDa protein (358 aa).

Lysine 18 is covalently cross-linked (Glycyl lysine isopeptide (Lys-Gly) (interchain with G-Cter in SUMO2)). Arginine 21 carries the asymmetric dimethylarginine modification. 7 WD repeats span residues 65-104, 108-147, 150-190, 192-231, 234-273, 284-323, and 326-358; these read GHEG…DNYA, GHSG…RVKR, GHTS…AIQT, QNTY…LTYT, GHAD…PKER, NFEK…ILYK, and GHAG…GEIQ. Lysine 271 participates in a covalent cross-link: Glycyl lysine isopeptide (Lys-Gly) (interchain with G-Cter in SUMO2).

As to quaternary structure, component of the pre-catalytic and catalytic spliceosome complexes. Component of the postcatalytic spliceosome P complex. Part of the U5 snRNP complex. Interacts with PRPF8. Component of the U4/U6-U5 tri-snRNP complex composed of the U4, U6 and U5 snRNAs and at least PRPF3, PRPF4, PRPF6, PRPF8, PRPF31, SNRNP200, TXNL4A, WDR57, SNRNP40, DDX23, CD2BP2, PPIH, SNU13, EFTUD2, SART1 and USP39. Component of the minor spliceosome, which splices U12-type introns.

The protein localises to the nucleus. Functionally, required for pre-mRNA splicing as component of the activated spliceosome. Component of the U5 small nuclear ribonucleoprotein (snRNP) complex and the U4/U6-U5 tri-snRNP complex, building blocks of the spliceosome. As a component of the minor spliceosome, involved in the splicing of U12-type introns in pre-mRNAs. This chain is U5 small nuclear ribonucleoprotein 40 kDa protein (SNRNP40), found in Bos taurus (Bovine).